Consider the following 210-residue polypeptide: N-(5'-phosphoribosyl)anthranilate isomerase (210 aa).

Belongs to the TrpF family.

It carries out the reaction N-(5-phospho-beta-D-ribosyl)anthranilate = 1-(2-carboxyphenylamino)-1-deoxy-D-ribulose 5-phosphate. The protein operates within amino-acid biosynthesis; L-tryptophan biosynthesis; L-tryptophan from chorismate: step 3/5. The protein is N-(5'-phosphoribosyl)anthranilate isomerase of Staphylococcus aureus (strain MRSA252).